The chain runs to 454 residues: MNFDSIIKNGLVILENGEQEVEVGIKDGKIAAIGQDLGTSAKIIDAKGSIVSPGMIDAHVHITEPGGGYRDEWEGYDTGTRAAAKGGVTTFIEMPLNQVPATVDEESIQEKFKAGKGKLSVDVASYGGLVPFDLDGGIQELDSNGVVAYKCFLATCGDRSIEGDFMNVDDYSLYEGMKQIAKTGKILSIHAENAAITDKLGEIASKNGETSLRAYVDSRPVFTEVEPIRKIILFAKETGCRVHIVHIACEEGVDEIVKAQQEGVDITCETCTHYLYFYKEELDHIGPVVKCSPPIREQSRLEGMWNRVLNGDISFVTSDHSPCTPDLKATDNAFEAWGGIAGLQNNVDVLFDEGVQKRNMPLSKFAAIIATNPAKRFNLASKGSIAVGKDADFVFIKKDAPYELKAEDLAYRHKISPYIGRKIGAQVVKTILRGVEIYDKEKGISNEKVGRFIP.

H59, H61, K150, H190, H246, and D319 together coordinate Zn(2+). At K150 the chain carries N6-carboxylysine.

It belongs to the metallo-dependent hydrolases superfamily. Allantoinase family. Homotetramer. Requires Zn(2+) as cofactor. Carboxylation allows a single lysine to coordinate two zinc ions.

The enzyme catalyses (S)-allantoin + H2O = allantoate + H(+). It participates in nitrogen metabolism; (S)-allantoin degradation; allantoate from (S)-allantoin: step 1/1. Functionally, catalyzes the conversion of allantoin (5-ureidohydantoin) to allantoic acid by hydrolytic cleavage of the five-member hydantoin ring. The sequence is that of Allantoinase from Bacillus licheniformis (strain ATCC 14580 / DSM 13 / JCM 2505 / CCUG 7422 / NBRC 12200 / NCIMB 9375 / NCTC 10341 / NRRL NRS-1264 / Gibson 46).